The chain runs to 96 residues: UPF0235 protein Acid345_4205 (96 aa).

This sequence belongs to the UPF0235 family.

The chain is UPF0235 protein Acid345_4205 from Koribacter versatilis (strain Ellin345).